A 407-amino-acid polypeptide reads, in one-letter code: Chorismate synthase (407 aa).

NADP(+) is bound by residues Arg-40 and Arg-46. FMN contacts are provided by residues 138–140 (RAS) and 259–260 (QA). Over residues 275–284 (RRGSRAHDEM) the composition is skewed to basic and acidic residues. Residues 275–308 (RRGSRAHDEMYPGTDGVVRSTNRAGGLEGGMTNG) form a disordered region. Residues Gly-303, 318–322 (KPIST), and Arg-344 contribute to the FMN site.

It belongs to the chorismate synthase family. Homotetramer. The cofactor is FMNH2.

The catalysed reaction is 5-O-(1-carboxyvinyl)-3-phosphoshikimate = chorismate + phosphate. It functions in the pathway metabolic intermediate biosynthesis; chorismate biosynthesis; chorismate from D-erythrose 4-phosphate and phosphoenolpyruvate: step 7/7. Its function is as follows. Catalyzes the anti-1,4-elimination of the C-3 phosphate and the C-6 proR hydrogen from 5-enolpyruvylshikimate-3-phosphate (EPSP) to yield chorismate, which is the branch point compound that serves as the starting substrate for the three terminal pathways of aromatic amino acid biosynthesis. This reaction introduces a second double bond into the aromatic ring system. This Mycobacterium marinum (strain ATCC BAA-535 / M) protein is Chorismate synthase.